Reading from the N-terminus, the 399-residue chain is Formate-dependent phosphoribosylglycinamide formyltransferase (399 aa).

Residues 22 to 23 (EL) and Glu-82 contribute to the N(1)-(5-phospho-beta-D-ribosyl)glycinamide site. Residues Arg-115, Lys-157, 162-167 (SSGKGQ), 197-200 (EAVV), and Glu-205 each bind ATP. An ATP-grasp domain is found at 120–315 (RLAAEELGLQ…EFELHARAIL (196 aa)). Mg(2+) is bound by residues Glu-274 and Glu-286. N(1)-(5-phospho-beta-D-ribosyl)glycinamide-binding positions include Asp-293, Lys-362, and 369-370 (RR).

The protein belongs to the PurK/PurT family. In terms of assembly, homodimer.

It carries out the reaction N(1)-(5-phospho-beta-D-ribosyl)glycinamide + formate + ATP = N(2)-formyl-N(1)-(5-phospho-beta-D-ribosyl)glycinamide + ADP + phosphate + H(+). It participates in purine metabolism; IMP biosynthesis via de novo pathway; N(2)-formyl-N(1)-(5-phospho-D-ribosyl)glycinamide from N(1)-(5-phospho-D-ribosyl)glycinamide (formate route): step 1/1. Its function is as follows. Involved in the de novo purine biosynthesis. Catalyzes the transfer of formate to 5-phospho-ribosyl-glycinamide (GAR), producing 5-phospho-ribosyl-N-formylglycinamide (FGAR). Formate is provided by PurU via hydrolysis of 10-formyl-tetrahydrofolate. The protein is Formate-dependent phosphoribosylglycinamide formyltransferase of Thioalkalivibrio sulfidiphilus (strain HL-EbGR7).